The following is a 216-amino-acid chain: Flagellar transcriptional regulator FlhC (216 aa).

Zn(2+)-binding residues include C137, C140, C157, and C160.

Belongs to the FlhC family. As to quaternary structure, heterohexamer composed of two FlhC and four FlhD subunits. Each FlhC binds a FlhD dimer, forming a heterotrimer, and a hexamer assembles by dimerization of two heterotrimers. Zn(2+) is required as a cofactor.

The protein localises to the cytoplasm. Functions in complex with FlhD as a master transcriptional regulator that regulates transcription of several flagellar and non-flagellar operons by binding to their promoter region. Activates expression of class 2 flagellar genes, including fliA, which is a flagellum-specific sigma factor that turns on the class 3 genes. Also regulates genes whose products function in a variety of physiological pathways. The polypeptide is Flagellar transcriptional regulator FlhC (Paraburkholderia atlantica).